We begin with the raw amino-acid sequence, 664 residues long: Bifunctional 3-dehydroquinate synthase/phosphatase (664 aa).

Positions 1–352 (MKKIFDDIYV…KIIDKYKNNF (352 aa)) are 3-dehydroquinate synthase. Residues 61–66 (DGEEYK), 95–99 (GVICD), 119–120 (TS), K132, K141, and 159–162 (FLKT) each bind NAD(+). Residues E174, H238, and H255 each contribute to the Zn(2+) site. The tract at residues 353 to 664 (LRASIDIGTN…GAILEGVENK (312 aa)) is GPPA/PPX.

The protein in the N-terminal section; belongs to the sugar phosphate cyclases superfamily. Dehydroquinate synthase family. It in the C-terminal section; belongs to the GppA/Ppx family. Monomer. It depends on NAD(+) as a cofactor. The cofactor is Co(2+). Zn(2+) serves as cofactor.

The protein resides in the cytoplasm. It catalyses the reaction 7-phospho-2-dehydro-3-deoxy-D-arabino-heptonate = 3-dehydroquinate + phosphate. It participates in metabolic intermediate biosynthesis; chorismate biosynthesis; chorismate from D-erythrose 4-phosphate and phosphoenolpyruvate: step 2/7. The protein is Bifunctional 3-dehydroquinate synthase/phosphatase (aroB) of Fusobacterium nucleatum subsp. nucleatum (strain ATCC 25586 / DSM 15643 / BCRC 10681 / CIP 101130 / JCM 8532 / KCTC 2640 / LMG 13131 / VPI 4355).